Here is a 251-residue protein sequence, read N- to C-terminus: Ubiquinone/menaquinone biosynthesis C-methyltransferase UbiE (251 aa).

Residues T74, D95, and 123–124 (NA) each bind S-adenosyl-L-methionine.

It belongs to the class I-like SAM-binding methyltransferase superfamily. MenG/UbiE family.

It catalyses the reaction a 2-demethylmenaquinol + S-adenosyl-L-methionine = a menaquinol + S-adenosyl-L-homocysteine + H(+). The enzyme catalyses a 2-methoxy-6-(all-trans-polyprenyl)benzene-1,4-diol + S-adenosyl-L-methionine = a 5-methoxy-2-methyl-3-(all-trans-polyprenyl)benzene-1,4-diol + S-adenosyl-L-homocysteine + H(+). It functions in the pathway quinol/quinone metabolism; menaquinone biosynthesis; menaquinol from 1,4-dihydroxy-2-naphthoate: step 2/2. The protein operates within cofactor biosynthesis; ubiquinone biosynthesis. In terms of biological role, methyltransferase required for the conversion of demethylmenaquinol (DMKH2) to menaquinol (MKH2) and the conversion of 2-polyprenyl-6-methoxy-1,4-benzoquinol (DDMQH2) to 2-polyprenyl-3-methyl-6-methoxy-1,4-benzoquinol (DMQH2). The sequence is that of Ubiquinone/menaquinone biosynthesis C-methyltransferase UbiE from Shewanella pealeana (strain ATCC 700345 / ANG-SQ1).